We begin with the raw amino-acid sequence, 434 residues long: Solute carrier RCH1 (434 aa).

Topologically, residues 1-15 (MKTQYSLIRKIWAHS) are cytoplasmic. A helical transmembrane segment spans residues 16-36 (VTEFLKSQWFFICLAILIVIA). Residues 37 to 50 (RFAPNFARDGGLIK) lie on the Extracellular side of the membrane. Residues 51–71 (GQYSIGYGCVAWIFLQSGLGM) form a helical membrane-spanning segment. Residues 72 to 87 (KSRSLMANMLNWRAHA) are Cytoplasmic-facing. The chain crosses the membrane as a helical span at residues 88-108 (TILVLSFLITSSIVYGFCCAV). Residues 109-118 (KAANDPKIDD) are Extracellular-facing. Residues 119–139 (WVLIGLILTATCPTTVASNVI) traverse the membrane as a helical segment. Over 140–149 (MTTNAGGNSL) the chain is Cytoplasmic. A helical transmembrane segment spans residues 150 to 170 (LCVCEVFIGNLLGAFITPALV). Topologically, residues 171-199 (QMFTNRAPFAYGNPATGNGIGALYGRVMK) are extracellular. Residues 200-220 (QVGLSVFVPLFVGQVIQNCFP) form a helical membrane-spanning segment. Over 221-234 (KGTAYYLGFLKKYH) the chain is Cytoplasmic. A helical membrane pass occupies residues 235-255 (IKIGSYMLLLIMFSSFSTAFY). Residues 256 to 264 (QDAFTSVSH) are Extracellular-facing. A helical membrane pass occupies residues 265–285 (VCIIFLCFFNLGIYIFFTGLS). Topologically, residues 286-327 (YLCARPWFILKLFPHEPIEGKSTRLYRYSYNIFRPFYYSKED) are cytoplasmic. A helical membrane pass occupies residues 328–348 (AICIMFCGPAKTAALGVSLIT). Over 349–362 (SQYGDKKEHLGKLL) the chain is Extracellular. The helical transmembrane segment at 363-383 (VPLVLYQVEQVMTANFFVSLF) threads the bilayer. The Cytoplasmic portion of the chain corresponds to 384–434 (KRWIQKDAQADGSESSCANENEEVDLEKIISIGTGENQSVLSNNVPYTQPR). S425 is modified (phosphoserine).

Belongs to the bile acid:sodium symporter (BASS) (TC 2.A.28) family.

The protein resides in the cell membrane. Its subcellular location is the bud neck. In terms of biological role, solute carrier protein that negatively regulates the cytosolic calcium homeostasis in response to high levels of extracellular calcium. In Saccharomyces cerevisiae (strain ATCC 204508 / S288c) (Baker's yeast), this protein is Solute carrier RCH1.